A 376-amino-acid chain; its full sequence is GTPase Obg (376 aa).

An Obg domain is found at 2 to 161; that stretch reads ASFVDEVLIR…RVVHVELRIV (160 aa). The OBG-type G domain maps to 162–328; it reads ADVGFVGLPN…LQEAFVRLSD (167 aa). GTP contacts are provided by residues 168-175, 193-197, 215-218, 282-285, and 309-311; these read GLPNAGKS, FTTRI, DVPG, TKLD, and SVH. Mg(2+)-binding residues include S175 and T195.

It belongs to the TRAFAC class OBG-HflX-like GTPase superfamily. OBG GTPase family. Monomer. Requires Mg(2+) as cofactor.

It is found in the cytoplasm. An essential GTPase which binds GTP, GDP and possibly (p)ppGpp with moderate affinity, with high nucleotide exchange rates and a fairly low GTP hydrolysis rate. Plays a role in control of the cell cycle, stress response, ribosome biogenesis and in those bacteria that undergo differentiation, in morphogenesis control. The polypeptide is GTPase Obg (Treponema pallidum (strain Nichols)).